The following is a 249-amino-acid chain: Green-light absorbing proteorhodopsin (249 aa).

The signal sequence occupies residues methionine 1–alanine 17. Helical transmembrane passes span glycine 30–valine 49, leucine 62–isoleucine 84, leucine 99–glycine 121, leucine 128–alanine 147, alanine 151–alanine 168, methionine 189–glycine 211, and leucine 221–valine 243. Lysine 231 carries the post-translational modification N6-(retinylidene)lysine.

The protein belongs to the archaeal/bacterial/fungal opsin family. Post-translationally, contains one covalently linked retinal chromophore.

It is found in the cell membrane. In terms of biological role, light-driven proton pump that generates photothrophic energy. The sequence is that of Green-light absorbing proteorhodopsin from Gamma-proteobacterium EBAC31A08.